We begin with the raw amino-acid sequence, 768 residues long: Integrin beta-8 (768 aa).

Residues 1-42 (MCGSALGLPPAAFVRLRSCRPGPAAFLRAAWVLSLVLGLGRS) form the signal peptide. Residues 43–683 (ENSRCASSHA…ECFSSPSYLR (641 aa)) lie on the Extracellular side of the membrane. The PSI domain occupies 46 to 95 (RCASSHAVSCSECLALGPDCGWCVHEDFISGGPRSERCDIVSNLISKGCP). 25 disulfides stabilise this stretch: cysteine 47–cysteine 65, cysteine 55–cysteine 469, cysteine 58–cysteine 83, cysteine 68–cysteine 94, cysteine 211–cysteine 218, cysteine 266–cysteine 307, cysteine 407–cysteine 419, cysteine 439–cysteine 467, cysteine 471–cysteine 491, cysteine 471–cysteine 494, cysteine 481–cysteine 494, cysteine 499–cysteine 528, cysteine 511–cysteine 526, cysteine 520–cysteine 531, cysteine 533–cysteine 546, cysteine 553–cysteine 567, cysteine 561–cysteine 572, cysteine 574–cysteine 583, cysteine 585–cysteine 609, cysteine 593–cysteine 607, cysteine 601–cysteine 612, cysteine 614–cysteine 624, cysteine 627–cysteine 630, cysteine 634–cysteine 661, and cysteine 640–cysteine 657. The region spanning 146-384 (PVDLYYLVDV…NLVVEAYQKL (239 aa)) is the VWFA domain. Mg(2+)-binding residues include aspartate 154 and serine 156. Position 193 (aspartate 193) interacts with Ca(2+). The N-linked (GlcNAc...) asparagine glycan is linked to asparagine 233. Asparagine 249, aspartate 251, proline 253, and glutamate 254 together coordinate Ca(2+). Residue glutamate 254 participates in Mg(2+) binding. A glycan (N-linked (GlcNAc...) asparagine) is linked at asparagine 402. Residues asparagine 421, asparagine 431, and asparagine 456 are each glycosylated (N-linked (GlcNAc...) asparagine). I-EGF domains follow at residues 471 to 495 (CEAS…PQCQ), 499 to 547 (CHQE…KYCE), 548 to 584 (KDDF…DRCQ), and 585 to 625 (CPSA…RFCE). The N-linked (GlcNAc...) asparagine glycan is linked to asparagine 648. A helical transmembrane segment spans residues 684–703 (IFFIIFIVTFLIGLLKILII). The Cytoplasmic portion of the chain corresponds to 704–768 (RQVILQWNSS…NAHETFRCNF (65 aa)).

The protein belongs to the integrin beta chain family. Heterodimer of an alpha and a beta subunit. Beta-8 (ITGB8) associates with alpha-V (ITGAV) to form ITGAV:ITGB8. ITGAV:ITGB8 interacts with TGFB1. In terms of tissue distribution, placenta, kidney, brain, ovary, uterus and in several transformed cells.

It localises to the cell membrane. Its function is as follows. Integrin alpha-V:beta-8 (ITGAV:ITGB8) is a receptor for fibronectin. It recognizes the sequence R-G-D in its ligands. Integrin alpha-V:beta-6 (ITGAV:ITGB6) mediates R-G-D-dependent release of transforming growth factor beta-1 (TGF-beta-1) from regulatory Latency-associated peptide (LAP), thereby playing a key role in TGF-beta-1 activation on the surface of activated regulatory T-cells (Tregs). Required during vasculogenesis. In Oryctolagus cuniculus (Rabbit), this protein is Integrin beta-8 (ITGB8).